Reading from the N-terminus, the 202-residue chain is MLKLLKVSITGDLSSGKTEACQVFQELGAYVVSADEISHSFLIPHTRIGRRVIDLLGSDVVVDGAFDAQAIAAKVFYNSVLLQGLEAILHPEVCRIIEEQYHQSIQDGNYPLFVAEVPLLYEIHYAKWFDSVILVMANEDIRRERFMKKTGRSSEDFDQRCSRFLNVEEKLAQADVVVENNGTKKELHQKIEEYFYALKGAL.

The DPCK domain maps to 6–202 (KVSITGDLSS…EYFYALKGAL (197 aa)). 14–19 (SSGKTE) serves as a coordination point for ATP.

The protein belongs to the CoaE family.

Its subcellular location is the cytoplasm. It catalyses the reaction 3'-dephospho-CoA + ATP = ADP + CoA + H(+). It participates in cofactor biosynthesis; coenzyme A biosynthesis; CoA from (R)-pantothenate: step 5/5. Catalyzes the phosphorylation of the 3'-hydroxyl group of dephosphocoenzyme A to form coenzyme A. The sequence is that of Dephospho-CoA kinase from Chlamydia pneumoniae (Chlamydophila pneumoniae).